Here is a 614-residue protein sequence, read N- to C-terminus: Aspartate--tRNA ligase (614 aa).

Residue Glu-174 coordinates L-aspartate. An aspartate region spans residues 198-201; that stretch reads QLFK. Residue Arg-220 coordinates L-aspartate. Residues 220-222 and Gln-229 contribute to the ATP site; that span reads RDE. His-448 lines the L-aspartate pocket. Position 482 (Glu-482) interacts with ATP. Position 489 (Arg-489) interacts with L-aspartate. 534-537 contributes to the ATP binding site; it reads GLDR. A disordered region spans residues 587-614; sequence YEDSVKETEQRLEKEAQEDADKNSTWDE.

It belongs to the class-II aminoacyl-tRNA synthetase family. Type 1 subfamily. As to quaternary structure, homodimer.

It is found in the cytoplasm. It carries out the reaction tRNA(Asp) + L-aspartate + ATP = L-aspartyl-tRNA(Asp) + AMP + diphosphate. Functionally, catalyzes the attachment of L-aspartate to tRNA(Asp) in a two-step reaction: L-aspartate is first activated by ATP to form Asp-AMP and then transferred to the acceptor end of tRNA(Asp). The protein is Aspartate--tRNA ligase of Lactobacillus johnsonii (strain CNCM I-12250 / La1 / NCC 533).